The primary structure comprises 840 residues: DNA gyrase subunit A (840 aa).

Positions 51–516 (LPDVRDGFKP…VSSHIDDEDL (466 aa)) constitute a Topo IIA-type catalytic domain. Y139 serves as the catalytic O-(5'-phospho-DNA)-tyrosine intermediate. A GyrA-box motif is present at residues 543 to 549 (QRRGGVG).

The protein belongs to the type II topoisomerase GyrA/ParC subunit family. As to quaternary structure, heterotetramer, composed of two GyrA and two GyrB chains. In the heterotetramer, GyrA contains the active site tyrosine that forms a transient covalent intermediate with DNA, while GyrB binds cofactors and catalyzes ATP hydrolysis.

The protein resides in the cytoplasm. The enzyme catalyses ATP-dependent breakage, passage and rejoining of double-stranded DNA.. Its function is as follows. A type II topoisomerase that negatively supercoils closed circular double-stranded (ds) DNA in an ATP-dependent manner to modulate DNA topology and maintain chromosomes in an underwound state. Negative supercoiling favors strand separation, and DNA replication, transcription, recombination and repair, all of which involve strand separation. Also able to catalyze the interconversion of other topological isomers of dsDNA rings, including catenanes and knotted rings. Type II topoisomerases break and join 2 DNA strands simultaneously in an ATP-dependent manner. The chain is DNA gyrase subunit A from Ureaplasma parvum serovar 3 (strain ATCC 700970).